The following is a 183-amino-acid chain: Endoribonuclease YbeY (183 aa).

His143, His147, and His153 together coordinate Zn(2+).

The protein belongs to the endoribonuclease YbeY family. Zn(2+) is required as a cofactor.

Its subcellular location is the cytoplasm. Functionally, single strand-specific metallo-endoribonuclease involved in late-stage 70S ribosome quality control and in maturation of the 3' terminus of the 16S rRNA. The chain is Endoribonuclease YbeY from Rickettsia bellii (strain RML369-C).